Reading from the N-terminus, the 354-residue chain is UDP-3-O-acylglucosamine N-acyltransferase (354 aa).

His-250 functions as the Proton acceptor in the catalytic mechanism.

Belongs to the transferase hexapeptide repeat family. LpxD subfamily. In terms of assembly, homotrimer.

The catalysed reaction is a UDP-3-O-[(3R)-3-hydroxyacyl]-alpha-D-glucosamine + a (3R)-hydroxyacyl-[ACP] = a UDP-2-N,3-O-bis[(3R)-3-hydroxyacyl]-alpha-D-glucosamine + holo-[ACP] + H(+). Its pathway is bacterial outer membrane biogenesis; LPS lipid A biosynthesis. Catalyzes the N-acylation of UDP-3-O-acylglucosamine using 3-hydroxyacyl-ACP as the acyl donor. Is involved in the biosynthesis of lipid A, a phosphorylated glycolipid that anchors the lipopolysaccharide to the outer membrane of the cell. This is UDP-3-O-acylglucosamine N-acyltransferase from Methylococcus capsulatus (strain ATCC 33009 / NCIMB 11132 / Bath).